The chain runs to 301 residues: Protoheme IX farnesyltransferase (301 aa).

9 consecutive transmembrane segments (helical) span residues 29-49, 51-71, 96-116, 123-143, 151-171, 177-197, 223-243, 244-264, and 281-301; these read VVALMLLTVLVGMCLAVPGTV, LVPLIAGMAGIGMMAGSAAAF, ISIIKAISFASILGTLGFIIL, LTAWLTFASLIGYAVVYTAYL, IVVGGLAGAMPPLLGWTAVTG, ALLLVIIIFAWTPPHFWALAI, CIFLYTVLLAIACLLPVLVGM, CGPVYLVSSTLLSAGFIYKAW, and FSIYHLMLLFIALLVDHYLWV.

The protein belongs to the UbiA prenyltransferase family. Protoheme IX farnesyltransferase subfamily.

The protein localises to the cell inner membrane. It catalyses the reaction heme b + (2E,6E)-farnesyl diphosphate + H2O = Fe(II)-heme o + diphosphate. The protein operates within porphyrin-containing compound metabolism; heme O biosynthesis; heme O from protoheme: step 1/1. Functionally, converts heme B (protoheme IX) to heme O by substitution of the vinyl group on carbon 2 of heme B porphyrin ring with a hydroxyethyl farnesyl side group. The polypeptide is Protoheme IX farnesyltransferase (Shewanella pealeana (strain ATCC 700345 / ANG-SQ1)).